The primary structure comprises 878 residues: Phosphoenolpyruvate carboxylase (878 aa).

Active-site residues include His-138 and Lys-545.

This sequence belongs to the PEPCase type 1 family. The cofactor is Mg(2+).

It catalyses the reaction oxaloacetate + phosphate = phosphoenolpyruvate + hydrogencarbonate. Functionally, forms oxaloacetate, a four-carbon dicarboxylic acid source for the tricarboxylic acid cycle. The polypeptide is Phosphoenolpyruvate carboxylase (Shewanella loihica (strain ATCC BAA-1088 / PV-4)).